Consider the following 388-residue polypeptide: Succinate--CoA ligase [ADP-forming] subunit beta (388 aa).

Residues 9–244 (KQLFARYGLP…QSQEDPREAQ (236 aa)) form the ATP-grasp domain. ATP is bound by residues Lys46, 53 to 55 (GRG), Glu99, Thr102, and Glu107. Residues Asn199 and Asp213 each coordinate Mg(2+). Substrate-binding positions include Asn264 and 321 to 323 (GIV).

It belongs to the succinate/malate CoA ligase beta subunit family. Heterotetramer of two alpha and two beta subunits. Requires Mg(2+) as cofactor.

It catalyses the reaction succinate + ATP + CoA = succinyl-CoA + ADP + phosphate. The catalysed reaction is GTP + succinate + CoA = succinyl-CoA + GDP + phosphate. It participates in carbohydrate metabolism; tricarboxylic acid cycle; succinate from succinyl-CoA (ligase route): step 1/1. Functionally, succinyl-CoA synthetase functions in the citric acid cycle (TCA), coupling the hydrolysis of succinyl-CoA to the synthesis of either ATP or GTP and thus represents the only step of substrate-level phosphorylation in the TCA. The beta subunit provides nucleotide specificity of the enzyme and binds the substrate succinate, while the binding sites for coenzyme A and phosphate are found in the alpha subunit. In Salmonella choleraesuis (strain SC-B67), this protein is Succinate--CoA ligase [ADP-forming] subunit beta.